Reading from the N-terminus, the 325-residue chain is GTP 3',8-cyclase (325 aa).

Residues 4-219 enclose the Radical SAM core domain; that stretch reads TYQREINYLR…DAISAKLGPL (216 aa). Arginine 13 is a binding site for GTP. Cysteine 20 and cysteine 24 together coordinate [4Fe-4S] cluster. Tyrosine 26 contributes to the S-adenosyl-L-methionine binding site. Cysteine 27 contacts [4Fe-4S] cluster. Residue arginine 63 participates in GTP binding. Glycine 67 is a binding site for S-adenosyl-L-methionine. Threonine 94 is a binding site for GTP. Position 118 (serine 118) interacts with S-adenosyl-L-methionine. Residue lysine 155 coordinates GTP. Residue methionine 189 participates in S-adenosyl-L-methionine binding. Residues cysteine 254 and cysteine 257 each contribute to the [4Fe-4S] cluster site. Residue 259–261 participates in GTP binding; it reads RLR. Residue cysteine 271 participates in [4Fe-4S] cluster binding.

The protein belongs to the radical SAM superfamily. MoaA family. As to quaternary structure, monomer and homodimer. Requires [4Fe-4S] cluster as cofactor.

The catalysed reaction is GTP + AH2 + S-adenosyl-L-methionine = (8S)-3',8-cyclo-7,8-dihydroguanosine 5'-triphosphate + 5'-deoxyadenosine + L-methionine + A + H(+). It participates in cofactor biosynthesis; molybdopterin biosynthesis. Functionally, catalyzes the cyclization of GTP to (8S)-3',8-cyclo-7,8-dihydroguanosine 5'-triphosphate. The chain is GTP 3',8-cyclase from Pelotomaculum thermopropionicum (strain DSM 13744 / JCM 10971 / SI).